Consider the following 116-residue polypeptide: Translation initiation factor 1A (116 aa).

A disordered region spans residues 1–25; that stretch reads MRCLSKKHQKQGDEHGGEIPLPNPD. One can recognise an S1-like domain in the interval 17 to 91; sequence GEIPLPNPDE…EKGEVVYKYG (75 aa).

It belongs to the eIF-1A family.

Functionally, seems to be required for maximal rate of protein biosynthesis. Enhances ribosome dissociation into subunits and stabilizes the binding of the initiator Met-tRNA(I) to 40 S ribosomal subunits. This is Translation initiation factor 1A (eIF1A) from Desulfurococcus amylolyticus (strain DSM 18924 / JCM 16383 / VKM B-2413 / 1221n) (Desulfurococcus kamchatkensis).